Reading from the N-terminus, the 98-residue chain is UPF0390 protein zgc136864 (98 aa).

Basic residues predominate over residues 1–30 (MAQGKQKFKAQRPGGAKKHQNKPKGLKKGG). 2 disordered regions span residues 1–38 (MAQGKQKFKAQRPGGAKKHQNKPKGLKKGGRIIAPKKA) and 63–98 (TQKASTSLHKKLSVLKTPAQKSGTAGAPKPAAGPSK). The segment covering 83–98 (KSGTAGAPKPAAGPSK) has biased composition (low complexity).

Belongs to the UPF0390 family.

In Danio rerio (Zebrafish), this protein is UPF0390 protein zgc136864.